The following is a 736-amino-acid chain: MEALIPVINKLQDVFNTVGADIIQLPQIVVVGTQSSGKSSVLESLVGRDLLPRGTGVVTRRPLILQLVHVSPEDKRKTTGEENGVEAEEWGKFLHTKNKLYTDFDEIRQEIENETERISGNNKGVSPEPIHLKVFSPNVVNLTLVDLPGMTKVPVGDQPKDIELQIRELILRFISNPNSIILAVTAANTDMATSEALKISREVDPDGRRTLAVITKLDLMDAGTDAMDVLMGRVIPVKLGIIGVVNRSQLDINNKKSVTDSIRDEYAFLQKKYPSLANRNGTKYLARTLNRLLMHHIRDCLPELKTRINVLAAQYQSLLNSYGEPVDDKSATLLQLITKFATEYCNTIEGTAKYIETSELCGGARICYIFHETFGRTLESVDPLGGLNTIDILTAIRNATGPRPALFVPEVSFELLVKRQIKRLEEPSLRCVELVHEEMQRIIQHCSNYSTQELLRFPKLHDAIVEVVTCLLRKRLPVTNEMVHNLVAIELAYINTKHPDFADACGLMNNNIEEQRRNRLARELPSAGSRDKSSKVPSALAPASQEPPPAASAEADGKLIQDNRRETKNVPSAGGGIGDGGQEPTTGNWRGMLKTSKAEELLAEEKSKPIPIMPASPQKGHAVNLLDVPVPVARKLSAREQRDCEVIERLIKSYFLIVRKNIQDSVPKAVMHFLVNHVKDTLQSELVGQLYKSSLLDDLLTESEDMAQRRKEAADMLKALQGASQIIAEIRETHLW.

The residue at position 1 (Met1) is an N-acetylmethionine. Residues 22-302 (IIQLPQIVVV…LMHHIRDCLP (281 aa)) form the Dynamin-type G domain. The interval 32 to 39 (GTQSSGKS) is G1 motif. 32–40 (GTQSSGKSS) contributes to the GTP binding site. Residues 58–60 (VTR) form a G2 motif region. The interval 146–149 (DLPG) is G3 motif. The segment at 215-218 (TKLD) is G4 motif. Residues 215-221 (TKLDLMD) and 246-249 (NRSQ) each bind GTP. The interval 245–248 (VNRS) is G5 motif. Residues 344-489 (YCNTIEGTAK…NEMVHNLVAI (146 aa)) form a middle domain region. Residues 448–685 (NYSTQELLRF…NHVKDTLQSE (238 aa)) form an interaction with GSK3B region. Positions 502–569 (ADACGLMNNN…IQDNRRETKN (68 aa)) are b domain. The segment at 522–554 (RELPSAGSRDKSSKVPSALAPASQEPPPAASAE) is disordered. Ser529 is subject to Phosphoserine. Glycyl lysine isopeptide (Lys-Gly) (interchain with G-Cter in SUMO) cross-links involve residues Lys532, Lys535, Lys558, and Lys568. Residues 542–736 (PASQEPPPAA…IAEIRETHLW (195 aa)) are C-terminal dimerization domain. The interval 566-588 (ETKNVPSAGGGIGDGGQEPTTGN) is disordered. O-linked (GlcNAc) threonine glycans are attached at residues Thr585 and Thr586. Lys594 participates in a covalent cross-link: Glycyl lysine isopeptide (Lys-Gly) (interchain with G-Cter in SUMO). N6-acetyllysine; alternate is present on Lys597. Lys597 participates in a covalent cross-link: Glycyl lysine isopeptide (Lys-Gly) (interchain with G-Cter in SUMO); alternate. Lys606 participates in a covalent cross-link: Glycyl lysine isopeptide (Lys-Gly) (interchain with G-Cter in SUMO). Ser607 is modified (phosphoserine). Residue Lys608 forms a Glycyl lysine isopeptide (Lys-Gly) (interchain with G-Cter in SUMO) linkage. Position 616 is a phosphoserine; by PINK1 (Ser616). Residue Ser637 is modified to Phosphoserine; by CAMK1 and PKA. S-nitrosocysteine is present on Cys644. The region spanning 644–735 (CEVIERLIKS…IIAEIRETHL (92 aa)) is the GED domain. The interval 654 to 668 (YFLIVRKNIQDSVPK) is important for homodimerization.

The protein belongs to the TRAFAC class dynamin-like GTPase superfamily. Dynamin/Fzo/YdjA family. Homotetramer; dimerizes through the N-terminal GTP-middle region of one molecule binding to the GED domain of another DNM1L molecule. Oligomerizes in a GTP-dependent manner to form membrane-associated tubules with a spiral pattern. Interacts with GSK3B and MARCHF5. Interacts (via the GTPase and B domains) with UBE2I; the interaction promotes sumoylation of DNM1L, mainly in its B domain. Interacts with PPP3CA; the interaction dephosphorylates DNM1L and regulates its transition to mitochondria. Interacts with BCL2L1 isoform BCL-X(L) and CLTA; DNM1L and BCL2L1 isoform BCL-X(L) may form a complex in synaptic vesicles that also contains clathrin and MFF. Interacts with MFF; the interaction is inhibited by C11orf65/MFI. Interacts with FIS1. Interacts with MIEF2 and MIEF1; GTP-dependent, regulates GTP hydrolysis and DNM1L oligomerization. Interacts with PGAM5; this interaction leads to dephosphorylation at Ser-656 and activation of GTPase activity and eventually to mitochondria fragmentation. Interacts with RALBP1; during mitosis, recruits DNM1L to the mitochondrion and mediates its activation by the mitotic kinase cyclin B-CDK1. Interacts with FUNDC1; this interaction recruits DNM1L/DRP1 at ER-mitochondria contact sites. In terms of processing, phosphorylation/dephosphorylation events on two sites near the GED domain regulate mitochondrial fission. Phosphorylation on Ser-637 inhibits mitochondrial fission probably through preventing intramolecular interaction. Dephosphorylated on this site by PPP3CA which promotes mitochondrial fission. Phosphorylation on Ser-616 by Pink1 activates the GTPase activity and promotes mitochondrial fission. Phosphorylated in a circadian manner at Ser-637. Dephosphorylated by PGAM5. Post-translationally, sumoylated on various lysine residues within the B domain, probably by MUL1. Sumoylation positively regulates mitochondrial fission. Desumoylated by SENP5 during G2/M transition of mitosis. Appears to be linked to its catalytic activity. S-nitrosylation increases DNM1L dimerization, mitochondrial fission and causes neuronal damage. In terms of processing, O-GlcNAcylation augments the level of the GTP-bound active form of DNM1L and induces translocation from the cytoplasm to mitochondria in cardiomyocytes. It also decreases phosphorylation at Ser-637. Post-translationally, ubiquitination by MARCHF5 affects mitochondrial morphology. In terms of tissue distribution, expressed in the cerebellum and in several regions of the cerebrum and diencephalon. Strongly expressed in the cerebellar Purkinje cells and in the pontile giant neurons. Widely expressed. As to expression, brain-specific. In terms of tissue distribution, brain-specific (at protein level). Expressed in most of the subregions of the brain, including the cerebellum, midbrain, hippocampus, striatum, cerebral cortex, and brain stem. Weakly expressed in the olfactory bulb.

Its subcellular location is the cytoplasm. It is found in the cytosol. The protein resides in the golgi apparatus. It localises to the endomembrane system. The protein localises to the mitochondrion outer membrane. Its subcellular location is the peroxisome. It is found in the membrane. The protein resides in the clathrin-coated pit. It localises to the cytoplasmic vesicle. The protein localises to the secretory vesicle. Its subcellular location is the synaptic vesicle membrane. It is found in the lysosome. The protein resides in the late endosome. It localises to the cell membrane. The protein localises to the postsynaptic density. The enzyme catalyses GTP + H2O = GDP + phosphate + H(+). Functionally, functions in mitochondrial and peroxisomal division. Mediates membrane fission through oligomerization into membrane-associated tubular structures that wrap around the scission site to constrict and sever the mitochondrial membrane through a GTP hydrolysis-dependent mechanism. The specific recruitment at scission sites is mediated by membrane receptors like MFF, MIEF1 and MIEF2 for mitochondrial membranes. While the recruitment by the membrane receptors is GTP-dependent, the following hydrolysis of GTP induces the dissociation from the receptors and allows DNM1L filaments to curl into closed rings that are probably sufficient to sever a double membrane. Acts downstream of PINK1 to promote mitochondrial fission in a PRKN-dependent manner. Plays an important role in mitochondrial fission during mitosis. Required for formation of endocytic vesicles. Through its function in mitochondrial division, ensures the survival of at least some types of postmitotic neurons, including Purkinje cells, by suppressing oxidative damage. Required for normal brain development, including that of cerebellum. Facilitates developmentally regulated apoptosis during neural tube formation. Required for a normal rate of cytochrome c release and caspase activation during apoptosis; this requirement may depend upon the cell type and the physiological apoptotic cues. Proposed to regulate synaptic vesicle membrane dynamics through association with BCL2L1 isoform Bcl-X(L) which stimulates its GTPase activity in synaptic vesicles; the function may require its recruitment by MFF to clathrin-containing vesicles. Required for programmed necrosis execution. Rhythmic control of its activity following phosphorylation at Ser-637 is essential for the circadian control of mitochondrial ATP production. Regulates postsynaptic clathrin-mediated endocytosis by positioning the endocytic zone at the postsynaptic density, independently of mitochondrial division. This chain is Dynamin-1-like protein, found in Mus musculus (Mouse).